We begin with the raw amino-acid sequence, 301 residues long: Uricase (301 aa).

Residues Lys11 and Thr58 each act as charge relay system in the active site. Residues Thr58, Asp59, Phe160, Arg177, Val228, Gln229, and Asn255 each coordinate urate. The active-site Charge relay system is His257. The Microbody targeting signal signature appears at 299 to 301 (AKL).

It belongs to the uricase family.

The protein localises to the peroxisome. The enzyme catalyses urate + O2 + H2O = 5-hydroxyisourate + H2O2. It participates in purine metabolism; urate degradation; (S)-allantoin from urate: step 1/3. Its function is as follows. Catalyzes the oxidation of uric acid to 5-hydroxyisourate, which is further processed to form (S)-allantoin. In Emericella nidulans (strain FGSC A4 / ATCC 38163 / CBS 112.46 / NRRL 194 / M139) (Aspergillus nidulans), this protein is Uricase (uaZ).